The chain runs to 511 residues: Histidine ammonia-lyase (511 aa).

Positions 144 to 146 form a cross-link, 5-imidazolinone (Ala-Gly); that stretch reads ASG. The residue at position 145 (S145) is a 2,3-didehydroalanine (Ser).

Belongs to the PAL/histidase family. In terms of processing, contains an active site 4-methylidene-imidazol-5-one (MIO), which is formed autocatalytically by cyclization and dehydration of residues Ala-Ser-Gly.

It localises to the cytoplasm. It carries out the reaction L-histidine = trans-urocanate + NH4(+). It participates in amino-acid degradation; L-histidine degradation into L-glutamate; N-formimidoyl-L-glutamate from L-histidine: step 1/3. This is Histidine ammonia-lyase from Halalkalibacterium halodurans (strain ATCC BAA-125 / DSM 18197 / FERM 7344 / JCM 9153 / C-125) (Bacillus halodurans).